The chain runs to 142 residues: Hemoglobin subunit alpha-2 (142 aa).

The 141-residue stretch at 2–142 (LLTADDKKHI…VSSVLTSKYR (141 aa)) folds into the Globin domain. His-59 is an O2 binding site. Heme b is bound at residue His-88.

The protein belongs to the globin family. As to quaternary structure, heterotetramer of two alpha chains and two beta chains. In terms of tissue distribution, red blood cells.

Functionally, involved in oxygen transport from the lung to the various peripheral tissues. The polypeptide is Hemoglobin subunit alpha-2 (hba2) (Xenopus borealis (Kenyan clawed frog)).